The following is a 149-amino-acid chain: NADH-ubiquinone oxidoreductase chain 6 (149 aa).

A run of 4 helical transmembrane segments spans residues 23–43 (ILML…FYFI), 51–71 (MMMI…MISL), 83–103 (LSVT…MTKL), and 114–134 (VNFV…LTII).

The protein belongs to the complex I subunit 6 family.

It is found in the mitochondrion membrane. It catalyses the reaction a ubiquinone + NADH + 5 H(+)(in) = a ubiquinol + NAD(+) + 4 H(+)(out). Core subunit of the mitochondrial membrane respiratory chain NADH dehydrogenase (Complex I) that is believed to belong to the minimal assembly required for catalysis. Complex I functions in the transfer of electrons from NADH to the respiratory chain. The immediate electron acceptor for the enzyme is believed to be ubiquinone. In Rhipicephalus sanguineus (Brown dog tick), this protein is NADH-ubiquinone oxidoreductase chain 6 (ND6).